The primary structure comprises 286 residues: ATP synthase gamma chain (286 aa).

The protein belongs to the ATPase gamma chain family. As to quaternary structure, F-type ATPases have 2 components, CF(1) - the catalytic core - and CF(0) - the membrane proton channel. CF(1) has five subunits: alpha(3), beta(3), gamma(1), delta(1), epsilon(1). CF(0) has three main subunits: a, b and c.

It is found in the cell inner membrane. Functionally, produces ATP from ADP in the presence of a proton gradient across the membrane. The gamma chain is believed to be important in regulating ATPase activity and the flow of protons through the CF(0) complex. The protein is ATP synthase gamma chain of Pseudoalteromonas atlantica (strain T6c / ATCC BAA-1087).